The following is a 407-amino-acid chain: MKLTFFTMQFPVSSETFVLNQVTHFIDIGYDVEIIAVFPGDLVNRHAAFDRYNLAAKTHYLLPDDKDGKTAKLAQRLAIILPKILKPGTLKSFHIGRYGAQSSKLLLPAIVAANKKPFAADIFLVHFGYAGALANKLRELKVLQGKQVTVFHGADISRRHILEEHKKDYPRLFAQNELLLPISRLWQHKLIAMGCPAEKINVTRMGIEPEKFNLKLRDALHQPLRILSVARLTEKKGLGVAIEACRILKQQGGCFEYTIIGYGDLEAQLKTAIADGDLEDCVKLVGFKPQEEIKRYLDEADIFLLPSLTAADGDMEGIPVALMEAMAVGLPVVSSEHSGIPELIEHNVSGWLAPEGDAQALAAILLRLSQGEADVVPVVLAARAKVETEFNQHIAYRQLAEILERLA.

Belongs to the glycosyltransferase group 1 family. Glycosyltransferase 4 subfamily.

Its pathway is glycan metabolism; exopolysaccharide biosynthesis. In terms of biological role, involved in the biosynthesis of amylovoran which functions as a virulence factor. This Erwinia amylovora (Fire blight bacteria) protein is Amylovoran biosynthesis glycosyltransferase AmsK (amsK).